We begin with the raw amino-acid sequence, 455 residues long: MLQKLSMTALVGLFSSVVSLVNADCTYSGGNYYCAQTDAIIYSNVGLSATYQDVTNMDESSCACTQADFTASGSLAPFNEELSVHFRGPIELLQFGVYYPNGESNALKKRSEKQSIESCKEGEAVVSRHKHQHKRDVAVEYVQVTSTVYVDSNGQTVTADSTNTVVGPAVPSSYTKDSTVLSSSAQAVETSESQSSISSSKTTSSAAAASSSSSSSSNTNGDWSRGSYFVPGSTSNCTFMNNQGGTAGSGVWSSCFGNSISFAASDGVSGAASAQALGDVTIKSGNEFMIFSGEECSGNNGDCGYYREGIPAYHGFGGADKIFVFEFSMPSDTSGSAYNQDMPAIWLLNAKIPRTLQYGDASCSCWKTGCGEMDLFEILTAGSDKLISHIHDGQDGGTQDYFERPTDGTLKAAVIFNSSDKTIHIIEVDESFDATLSDDVVDQWLSKSGSSAALP.

A signal peptide spans Met1 to Ala23. A disordered region spans residues Thr158 to Gly221. Residues Ser172–Glu189 are compositionally biased toward polar residues. Residues Thr190 to Thr219 show a composition bias toward low complexity. An N-linked (GlcNAc...) asparagine glycan is attached at Asn236. The ExDxxE motif signature appears at Glu372–Glu377. A glycan (N-linked (GlcNAc...) asparagine) is linked at Asn417.

It belongs to the PGA52 family.

Its subcellular location is the secreted. The protein localises to the cell wall. It catalyses the reaction Hydrolysis of (1-&gt;3)-beta-D-glucosidic linkages in (1-&gt;3)-beta-D-glucans.. Probable circularly permuted 1,3-beta-glucanase involved in cell wall modification through beta-1,3-glucan network alterations such as increased branching or remodeling. The chain is Probable circularly permuted 1,3-beta-glucanase TOS1 from Saccharomyces cerevisiae (strain ATCC 204508 / S288c) (Baker's yeast).